Consider the following 250-residue polypeptide: Proteasome subunit alpha type-4 (250 aa).

Belongs to the peptidase T1A family. As to quaternary structure, the 26S proteasome consists of a 20S proteasome core and two 19S regulatory subunits. The 20S proteasome core is composed of 28 subunits that are arranged in four stacked rings, resulting in a barrel-shaped structure. The two end rings are each formed by seven alpha subunits, and the two central rings are each formed by seven beta subunits. The catalytic chamber with the active sites is on the inside of the barrel.

It is found in the cytoplasm. The protein resides in the nucleus. Functionally, the proteasome is a multicatalytic proteinase complex which is characterized by its ability to cleave peptides with Arg, Phe, Tyr, Leu, and Glu adjacent to the leaving group at neutral or slightly basic pH. The proteasome has an ATP-dependent proteolytic activity. The chain is Proteasome subunit alpha type-4 (psmA4) from Dictyostelium discoideum (Social amoeba).